Here is a 500-residue protein sequence, read N- to C-terminus: Cytochrome P450 11B1, mitochondrial (500 aa).

Residues 1-24 constitute a mitochondrion transit peptide; that stretch reads MAFRLKSDVRLAGSWLCLRGARAL. A heme-binding site is contributed by Cys-447.

This sequence belongs to the cytochrome P450 family. Heme is required as a cofactor.

It is found in the mitochondrion inner membrane. The catalysed reaction is a steroid + 2 reduced [adrenodoxin] + O2 + 2 H(+) = an 11beta-hydroxysteroid + 2 oxidized [adrenodoxin] + H2O. It carries out the reaction 11-deoxycortisol + 2 reduced [adrenodoxin] + O2 + 2 H(+) = cortisol + 2 oxidized [adrenodoxin] + H2O. It catalyses the reaction 21-hydroxyprogesterone + 2 reduced [adrenodoxin] + O2 + 2 H(+) = corticosterone + 2 oxidized [adrenodoxin] + H2O. The enzyme catalyses 21-hydroxyprogesterone + 2 reduced [adrenodoxin] + O2 + 2 H(+) = 18-hydroxy-11-deoxycorticosterone + 2 oxidized [adrenodoxin] + H2O. The catalysed reaction is 21-hydroxyprogesterone + 2 reduced [adrenodoxin] + O2 + 2 H(+) = 19-hydroxy-11-deoxycorticosterone + 2 oxidized [adrenodoxin] + H2O. It carries out the reaction cortisol + 2 reduced [adrenodoxin] + O2 + 2 H(+) = 18-hydroxycortisol + 2 oxidized [adrenodoxin] + H2O. It catalyses the reaction 11-deoxycortisol + 2 reduced [adrenodoxin] + O2 + 2 H(+) = 18-hydroxy-11-deoxycortisol + 2 oxidized [adrenodoxin] + H2O. The protein operates within steroid biosynthesis; glucocorticoid biosynthesis. It functions in the pathway steroid hormone biosynthesis. A cytochrome P450 monooxygenase involved in the biosynthesis of adrenal corticoids. Catalyzes a variety of reactions that are essential for many species, including detoxification, defense, and the formation of endogenous chemicals like steroid hormones. Steroid 11beta, 18- and 19-hydroxylase with preferred regioselectivity at 11beta, then 18, and lastly 19. Catalyzes the hydroxylation of 11-deoxycortisol and 11-deoxycorticosterone (21-hydroxyprogesterone) at 11beta position, yielding cortisol or corticosterone, respectively, but cannot produce aldosterone. Mechanistically, uses molecular oxygen inserting one oxygen atom into a substrate for hydroxylation and reducing the second into a water molecule. Two electrons are provided by NADPH via a two-protein mitochondrial transfer system comprising flavoprotein FDXR (adrenodoxin/ferredoxin reductase) and nonheme iron-sulfur protein FDX1 or FDX2 (adrenodoxin/ferredoxin). Due to its lack of 18-oxidation activity, it is incapable of generating aldosterone. Could also be involved in the androgen metabolic pathway. The sequence is that of Cytochrome P450 11B1, mitochondrial (CYP11B1) from Cavia porcellus (Guinea pig).